A 379-amino-acid chain; its full sequence is tRNA(Met) cytidine acetate ligase (379 aa).

ATP is bound by residues 7 to 20 (ITEYNPFHNGHQYH), Gly100, Asn153, and Arg178.

This sequence belongs to the TmcAL family.

Its subcellular location is the cytoplasm. The enzyme catalyses cytidine(34) in elongator tRNA(Met) + acetate + ATP = N(4)-acetylcytidine(34) in elongator tRNA(Met) + AMP + diphosphate. Its function is as follows. Catalyzes the formation of N(4)-acetylcytidine (ac(4)C) at the wobble position of elongator tRNA(Met), using acetate and ATP as substrates. First activates an acetate ion to form acetyladenylate (Ac-AMP) and then transfers the acetyl group to tRNA to form ac(4)C34. The protein is tRNA(Met) cytidine acetate ligase of Staphylococcus aureus (strain MRSA252).